Here is a 169-residue protein sequence, read N- to C-terminus: 3-hydroxyacyl-[acyl-carrier-protein] dehydratase FabZ (169 aa).

His-74 is an active-site residue.

Belongs to the thioester dehydratase family. FabZ subfamily.

The protein resides in the cytoplasm. The enzyme catalyses a (3R)-hydroxyacyl-[ACP] = a (2E)-enoyl-[ACP] + H2O. Functionally, involved in unsaturated fatty acids biosynthesis. Catalyzes the dehydration of short chain beta-hydroxyacyl-ACPs and long chain saturated and unsaturated beta-hydroxyacyl-ACPs. The protein is 3-hydroxyacyl-[acyl-carrier-protein] dehydratase FabZ of Gluconobacter oxydans (strain 621H) (Gluconobacter suboxydans).